The chain runs to 181 residues: Cytochrome b6-f complex iron-sulfur subunit (181 aa).

The segment at Met1–Glu35 is disordered. A run of 2 helical transmembrane segments spans residues Val53–Val73 and Gly114–Asp134. One can recognise a Rieske domain in the interval Leu85 to Val178. Positions 124, 126, 142, and 145 each coordinate [2Fe-2S] cluster. A disulfide bond links Cys129 and Cys144.

The protein belongs to the Rieske iron-sulfur protein family. [2Fe-2S] cluster is required as a cofactor.

It localises to the cell inner membrane. It carries out the reaction 2 oxidized [plastocyanin] + a plastoquinol + 2 H(+)(in) = 2 reduced [plastocyanin] + a plastoquinone + 4 H(+)(out). Component of the green S-bacteria bc-complex which consists of the Rieske protein and cytochrome b subunit and which appears to lack a cytochrome c1-equivalent. This complex has a comparatively low redox potential. This is Cytochrome b6-f complex iron-sulfur subunit (petC) from Chlorobaculum tepidum (strain ATCC 49652 / DSM 12025 / NBRC 103806 / TLS) (Chlorobium tepidum).